The following is a 71-amino-acid chain: Exodeoxyribonuclease 7 small subunit (71 aa).

Belongs to the XseB family. In terms of assembly, heterooligomer composed of large and small subunits.

The protein localises to the cytoplasm. It carries out the reaction Exonucleolytic cleavage in either 5'- to 3'- or 3'- to 5'-direction to yield nucleoside 5'-phosphates.. Bidirectionally degrades single-stranded DNA into large acid-insoluble oligonucleotides, which are then degraded further into small acid-soluble oligonucleotides. This is Exodeoxyribonuclease 7 small subunit from Clostridium botulinum (strain Loch Maree / Type A3).